A 358-amino-acid polypeptide reads, in one-letter code: Aerobic magnesium-protoporphyrin IX monomethyl ester [oxidative] cyclase (358 aa).

The protein belongs to the AcsF family. It depends on Fe cation as a cofactor.

It catalyses the reaction Mg-protoporphyrin IX 13-monomethyl ester + 3 NADPH + 3 O2 + 2 H(+) = 3,8-divinyl protochlorophyllide a + 3 NADP(+) + 5 H2O. The protein operates within porphyrin-containing compound metabolism; chlorophyll biosynthesis. Catalyzes the formation of the isocyclic ring in chlorophyll biosynthesis in aerobic conditions. Mediates the cyclase reaction, which results in the formation of divinylprotochlorophyllide (Pchlide) characteristic of all chlorophylls from magnesium-protoporphyrin IX 13-monomethyl ester (MgPMME). This Rubrivivax gelatinosus (Rhodocyclus gelatinosus) protein is Aerobic magnesium-protoporphyrin IX monomethyl ester [oxidative] cyclase.